An 835-amino-acid chain; its full sequence is Protein translocase subunit SecA 1 (835 aa).

ATP-binding positions include Q85, G103–T107, and D492. The interval V788–V807 is disordered. 4 residues coordinate Zn(2+): C819, C821, C830, and C831.

It belongs to the SecA family. Monomer and homodimer. Part of the essential Sec protein translocation apparatus which comprises SecA, SecYEG and auxiliary proteins SecDF. Other proteins may also be involved. Zn(2+) serves as cofactor.

The protein resides in the cell membrane. Its subcellular location is the cytoplasm. The enzyme catalyses ATP + H2O + cellular proteinSide 1 = ADP + phosphate + cellular proteinSide 2.. Its function is as follows. Part of the Sec protein translocase complex. Interacts with the SecYEG preprotein conducting channel. Has a central role in coupling the hydrolysis of ATP to the transfer of proteins into and across the cell membrane, serving as an ATP-driven molecular motor driving the stepwise translocation of polypeptide chains across the membrane. The chain is Protein translocase subunit SecA 1 from Bacillus thuringiensis subsp. konkukian (strain 97-27).